The chain runs to 2410 residues: Dual specificity protein kinase splA (2410 aa).

Disordered stretches follow at residues 29 to 48, 66 to 103, 116 to 158, 187 to 252, 508 to 647, and 659 to 820; these read NNNNNNNNNNNNNNNNNNNN, NHPSLKIPPPPSPTSPYVRRHARQHSRSNSSNSPGELT, NTQT…SNGG, NISP…SSGI, QQLQ…VPSA, and SSSS…KKEG. 2 stretches are compositionally biased toward low complexity: residues 116 to 128 and 137 to 158; these read NTQTSPPTSTSPN and NTTTSSTTITRNSNNINNSNGG. Over residues 514–525 the composition is skewed to pro residues; that stretch reads QPPPTIQPPPQQ. A compositionally biased stretch (low complexity) spans 530-544; the sequence is LRGNRSSGNLSGLNS. Positions 545-554 are enriched in polar residues; that stretch reads FSLKQSTDSL. The span at 560 to 583 shows a compositional bias: low complexity; the sequence is SQQSTVSSNSTPIAATPISPLTAP. Over residues 584-594 the composition is skewed to pro residues; that stretch reads TSPPPPPPPPT. Low complexity-rich tracts occupy residues 595–618, 627–639, 659–686, 701–738, 746–759, and 777–813; these read NFNSKFNNNNNNNINNSSNNNTTV, VLPKSPSSRSPRP, SSSSNISTNNTDLNLSSSSSSSPPLNIS, SPSYKQQQQQQQQQQQQQQQLNNSSNSSYSPKPRSPSV, ISPNSSPIGSPNIS, and NTNNNNNNNNNNNNNNNNNNNNNNNNNNNNNNNNNTN. 2 B30.2/SPRY domains span residues 822–1004 and 1020–1209; these read SSWF…GPFS and DSGG…PPFK. Disordered regions lie at residues 1228–1428 and 1493–1512; these read PNGN…NNIY and SLGVSFSSPSSSPKTSPRKI. Composition is skewed to low complexity over residues 1229 to 1359, 1373 to 1399, 1419 to 1428, and 1493 to 1507; these read NGNN…NNNI, SSTGSLGGNNSSGNNNSSSGSIGNNSS, SSTNNNNNIY, and SLGVSFSSPSSSPKT. The 223-residue stretch at 1481–1703 folds into the B30.2/SPRY 3 domain; it reads PITASTNHTL…CVATFPGGHF (223 aa). In terms of domain architecture, SAM spans 1734–1798; that stretch reads WAPNDVAIWL…INRLNRMIQI (65 aa). Residues 1862–2105 form a disordered region; sequence KSYTQKEIED…PPPPPQLPVR (244 aa). A compositionally biased stretch (basic and acidic residues) spans 1865–1874; the sequence is TQKEIEDRNR. Residues 1951-1967 are compositionally biased toward low complexity; it reads SVSSTGGSSGFLTFPSS. Over residues 1989–2002 the composition is skewed to polar residues; the sequence is ITSNYKGITNTGQP. Over residues 2020 to 2070 the composition is skewed to low complexity; it reads SNNGNNGNNNNNNNNNNIKANQQQQQQSSYQQSQTQQQQQHITSTSTSTTN. Residues 2089 to 2102 show a composition bias toward pro residues; that stretch reads PSRPPPPPPPPPQL. A Protein kinase domain is found at 2115-2387; the sequence is LEFGQTIGKG…FKQIIVHLKE (273 aa). ATP-binding positions include 2121 to 2129 and K2142; that span reads IGKGFFGEV. The Proton acceptor role is filled by D2243.

This sequence belongs to the protein kinase superfamily. TKL Tyr protein kinase family. Tyrosine kinase domain is capable of autophosphorylation, in vitro; however it is also autophosphorylated on serine and threonine residues.

The enzyme catalyses L-tyrosyl-[protein] + ATP = O-phospho-L-tyrosyl-[protein] + ADP + H(+). Its function is as follows. Essential for spore differentiation. In Dictyostelium discoideum (Social amoeba), this protein is Dual specificity protein kinase splA (splA).